Consider the following 511-residue polypeptide: Maturase K (511 aa).

This sequence belongs to the intron maturase 2 family. MatK subfamily.

The protein localises to the plastid. Its subcellular location is the chloroplast. Functionally, usually encoded in the trnK tRNA gene intron. Probably assists in splicing its own and other chloroplast group II introns. This is Maturase K from Brachypodium distachyon (Purple false brome).